We begin with the raw amino-acid sequence, 98 residues long: Feather beta keratin (98 aa).

The residue at position 2 (Ser2) is an N-acetylserine.

Belongs to the avian keratin family. The avian keratins (F-ker, S-ker, C-ker and B-ker) are a complex mixture of very similar polypeptides.

This chain is Feather beta keratin, found in Mycteria americana (Wood stork).